Reading from the N-terminus, the 236-residue chain is Small ribosomal subunit protein uS2c (236 aa).

This sequence belongs to the universal ribosomal protein uS2 family.

It is found in the plastid. The protein resides in the chloroplast. This is Small ribosomal subunit protein uS2c (rps2) from Morus indica (Mulberry).